A 446-amino-acid chain; its full sequence is D(1A) dopamine receptor (446 aa).

Residues methionine 1–arginine 23 are Extracellular-facing. Asparagine 5 carries N-linked (GlcNAc...) asparagine glycosylation. Residues isoleucine 24–isoleucine 49 form a helical membrane-spanning segment. Residues arginine 50–asparagine 60 lie on the Cytoplasmic side of the membrane. The helical transmembrane segment at phenylalanine 61 to alanine 87 threads the bilayer. The Extracellular segment spans residues glycine 88–cysteine 96. Cysteine 96 and cysteine 186 form a disulfide bridge. Residues asparagine 97–valine 119 traverse the membrane as a helical segment. The Cytoplasmic segment spans residues aspartate 120–lysine 138. A helical transmembrane segment spans residues alanine 139–tryptophan 163. Residues histidine 164–arginine 192 are Extracellular-facing. A glycan (N-linked (GlcNAc...) asparagine) is linked at asparagine 175. A helical transmembrane segment spans residues threonine 193 to tyrosine 218. Topologically, residues arginine 219–lysine 272 are cytoplasmic. The helical transmembrane segment at threonine 273–glycine 299 threads the bilayer. Over serine 300 to threonine 312 the chain is Extracellular. The chain crosses the membrane as a helical span at residues phenylalanine 313–phenylalanine 337. The Cytoplasmic segment spans residues arginine 338–threonine 446. Residues cysteine 347 and cysteine 351 are each lipidated (S-palmitoyl cysteine).

It belongs to the G-protein coupled receptor 1 family. Interacts with DNAJC14 via its C-terminus. Interacts with DRD2. Interacts with DORIP1.

It is found in the cell membrane. The protein localises to the endoplasmic reticulum membrane. Its subcellular location is the cell projection. The protein resides in the cilium membrane. It localises to the dendrite. It is found in the dendritic spine. Dopamine receptor whose activity is mediated by G proteins which activate adenylyl cyclase. This is D(1A) dopamine receptor (DRD1) from Bos taurus (Bovine).